The primary structure comprises 217 residues: Phosphoenolpyruvate guanylyltransferase (217 aa).

Positions 150, 165, and 168 each coordinate phosphoenolpyruvate.

This sequence belongs to the CofC family.

It catalyses the reaction phosphoenolpyruvate + GTP + H(+) = enolpyruvoyl-2-diphospho-5'-guanosine + diphosphate. The protein operates within cofactor biosynthesis; coenzyme F420 biosynthesis. Its function is as follows. Guanylyltransferase that catalyzes the activation of phosphoenolpyruvate (PEP) as enolpyruvoyl-2-diphospho-5'-guanosine, via the condensation of PEP with GTP. It is involved in the biosynthesis of coenzyme F420, a hydride carrier cofactor. The protein is Phosphoenolpyruvate guanylyltransferase of Mycobacterium marinum (strain ATCC BAA-535 / M).